The chain runs to 132 residues: Small ribosomal subunit protein uS8c (132 aa).

This sequence belongs to the universal ribosomal protein uS8 family. Part of the 30S ribosomal subunit.

It is found in the plastid. The protein localises to the chloroplast. Functionally, one of the primary rRNA binding proteins, it binds directly to 16S rRNA central domain where it helps coordinate assembly of the platform of the 30S subunit. The polypeptide is Small ribosomal subunit protein uS8c (rps8) (Psilotum nudum (Whisk fern)).